We begin with the raw amino-acid sequence, 334 residues long: Putative B3 domain-containing protein At5g66980 (334 aa).

DNA-binding regions (TF-B3) lie at residues 8 to 105 (LQFF…FAND) and 218 to 317 (HPHF…VSGR).

It is found in the nucleus. The chain is Putative B3 domain-containing protein At5g66980 from Arabidopsis thaliana (Mouse-ear cress).